The primary structure comprises 168 residues: Chemoreceptor glutamine deamidase CheD (168 aa).

The protein belongs to the CheD family. Forms a complex with CheC.

It carries out the reaction L-glutaminyl-[protein] + H2O = L-glutamyl-[protein] + NH4(+). Functionally, deamidates glutamine residues to glutamate on methyl-accepting chemotaxis receptors (MCPs). CheD-mediated MCP deamidation is required for productive communication of the conformational signals of the chemoreceptors to the CheA kinase. The chain is Chemoreceptor glutamine deamidase CheD from Bacillus licheniformis (strain ATCC 14580 / DSM 13 / JCM 2505 / CCUG 7422 / NBRC 12200 / NCIMB 9375 / NCTC 10341 / NRRL NRS-1264 / Gibson 46).